The following is a 298-amino-acid chain: GTPase Era (298 aa).

Residues 8–176 (RCGRIAVIGR…VSDLLALLPE (169 aa)) form the Era-type G domain. The G1 stretch occupies residues 16 to 23 (GRPNVGKS). 16-23 (GRPNVGKS) contributes to the GTP binding site. Residues 42–46 (QTTRH) are G2. Residues 63–66 (DTPG) are G3. Residues 63–67 (DTPGL) and 125–128 (NKID) contribute to the GTP site. Residues 125 to 128 (NKID) form a G4 region. The interval 155 to 157 (VSA) is G5. A KH type-2 domain is found at 199-283 (VREQVMRQLG…FLETWVRVRK (85 aa)).

Belongs to the TRAFAC class TrmE-Era-EngA-EngB-Septin-like GTPase superfamily. Era GTPase family. As to quaternary structure, monomer.

Its subcellular location is the cytoplasm. It is found in the cell inner membrane. An essential GTPase that binds both GDP and GTP, with rapid nucleotide exchange. Plays a role in 16S rRNA processing and 30S ribosomal subunit biogenesis and possibly also in cell cycle regulation and energy metabolism. The polypeptide is GTPase Era (Xylella fastidiosa (strain Temecula1 / ATCC 700964)).